Consider the following 334-residue polypeptide: tRNA U34 carboxymethyltransferase (334 aa).

Carboxy-S-adenosyl-L-methionine contacts are provided by residues Lys91, Trp105, Lys110, Gly130, 152–154 (DPT), 181–182 (IE), Met196, Tyr200, and Arg315.

This sequence belongs to the class I-like SAM-binding methyltransferase superfamily. CmoB family. Homotetramer.

The enzyme catalyses carboxy-S-adenosyl-L-methionine + 5-hydroxyuridine(34) in tRNA = 5-carboxymethoxyuridine(34) in tRNA + S-adenosyl-L-homocysteine + H(+). Its function is as follows. Catalyzes carboxymethyl transfer from carboxy-S-adenosyl-L-methionine (Cx-SAM) to 5-hydroxyuridine (ho5U) to form 5-carboxymethoxyuridine (cmo5U) at position 34 in tRNAs. The protein is tRNA U34 carboxymethyltransferase of Klebsiella pneumoniae subsp. pneumoniae (strain ATCC 700721 / MGH 78578).